We begin with the raw amino-acid sequence, 406 residues long: Phosphopentomutase (406 aa).

Mn(2+) is bound by residues D10, D305, H310, D346, H347, and H358.

This sequence belongs to the phosphopentomutase family. The cofactor is Mn(2+).

It localises to the cytoplasm. It carries out the reaction 2-deoxy-alpha-D-ribose 1-phosphate = 2-deoxy-D-ribose 5-phosphate. The enzyme catalyses alpha-D-ribose 1-phosphate = D-ribose 5-phosphate. The protein operates within carbohydrate degradation; 2-deoxy-D-ribose 1-phosphate degradation; D-glyceraldehyde 3-phosphate and acetaldehyde from 2-deoxy-alpha-D-ribose 1-phosphate: step 1/2. Functionally, isomerase that catalyzes the conversion of deoxy-ribose 1-phosphate (dRib-1-P) and ribose 1-phosphate (Rib-1-P) to deoxy-ribose 5-phosphate (dRib-5-P) and ribose 5-phosphate (Rib-5-P), respectively. This is Phosphopentomutase from Agrobacterium fabrum (strain C58 / ATCC 33970) (Agrobacterium tumefaciens (strain C58)).